The chain runs to 672 residues: Transketolase (672 aa).

His35 provides a ligand contact to substrate. Thiamine diphosphate is bound by residues His75 and 124–126; that span reads GPL. Asp162 contributes to the Mg(2+) binding site. Gly163 and Asn192 together coordinate thiamine diphosphate. Mg(2+) is bound by residues Asn192 and Ile194. 3 residues coordinate substrate: His266, Arg361, and Ser388. Thiamine diphosphate is bound at residue His266. The active-site Proton donor is Glu415. Position 441 (Phe441) interacts with thiamine diphosphate. The substrate site is built by His465, Asp473, and Arg524.

The protein belongs to the transketolase family. As to quaternary structure, homodimer. The cofactor is Mg(2+). Requires Ca(2+) as cofactor. Mn(2+) is required as a cofactor. It depends on Co(2+) as a cofactor. Thiamine diphosphate serves as cofactor.

It carries out the reaction D-sedoheptulose 7-phosphate + D-glyceraldehyde 3-phosphate = aldehydo-D-ribose 5-phosphate + D-xylulose 5-phosphate. It participates in carbohydrate biosynthesis; Calvin cycle. Its pathway is carbohydrate degradation; pentose phosphate pathway. In terms of biological role, catalyzes the transfer of a two-carbon ketol group from a ketose donor to an aldose acceptor, via a covalent intermediate with the cofactor thiamine pyrophosphate. This chain is Transketolase (tktA), found in Rhodobacter capsulatus (strain ATCC BAA-309 / NBRC 16581 / SB1003).